The primary structure comprises 159 residues: Phosphopantetheine adenylyltransferase (159 aa).

Ser8 serves as a coordination point for substrate. ATP is bound by residues 8–9 (SF) and His16. Substrate-binding residues include Lys40, Val72, and Arg86. Residues 87–89 (GVR), Glu97, and 122–128 (YAALRSS) contribute to the ATP site.

Belongs to the bacterial CoaD family. In terms of assembly, homohexamer. Mg(2+) serves as cofactor.

The protein resides in the cytoplasm. The catalysed reaction is (R)-4'-phosphopantetheine + ATP + H(+) = 3'-dephospho-CoA + diphosphate. The protein operates within cofactor biosynthesis; coenzyme A biosynthesis; CoA from (R)-pantothenate: step 4/5. Functionally, reversibly transfers an adenylyl group from ATP to 4'-phosphopantetheine, yielding dephospho-CoA (dPCoA) and pyrophosphate. This chain is Phosphopantetheine adenylyltransferase, found in Treponema pallidum (strain Nichols).